Here is a 465-residue protein sequence, read N- to C-terminus: Cysteine--tRNA ligase (465 aa).

C27 serves as a coordination point for Zn(2+). A 'HIGH' region motif is present at residues P29–H39. Zn(2+) is bound by residues C207, H237, and E241. The 'KMSKS' region motif lies at K269 to S273. K272 contributes to the ATP binding site.

Belongs to the class-I aminoacyl-tRNA synthetase family. In terms of assembly, monomer. It depends on Zn(2+) as a cofactor.

It localises to the cytoplasm. The enzyme catalyses tRNA(Cys) + L-cysteine + ATP = L-cysteinyl-tRNA(Cys) + AMP + diphosphate. The polypeptide is Cysteine--tRNA ligase (Helicobacter pylori (strain HPAG1)).